A 316-amino-acid chain; its full sequence is L-lactate dehydrogenase (316 aa).

Residues Gly-13–Ile-15, Phe-34–Ile-36, Tyr-67, and Thr-79–Thr-83 each bind NAD(+). Substrate is bound at residue Arg-95. Residues Val-125–Asn-127, Leu-150, and Leu-154 contribute to the NAD(+) site. 2 residues coordinate substrate: Arg-158 and His-182. Position 182 (His-182) interacts with NAD(+). His-182 functions as the Proton acceptor in the catalytic mechanism.

It belongs to the LDH/MDH superfamily. LDH family. In terms of assembly, homotetramer.

It carries out the reaction (S)-lactate + NAD(+) = pyruvate + NADH + H(+). It participates in fermentation; pyruvate fermentation to lactate; (S)-lactate from pyruvate: step 1/1. The polypeptide is L-lactate dehydrogenase (Plasmodium berghei).